The sequence spans 152 residues: Proteolipid protein 2 (152 aa).

N-linked (GlcNAc...) asparagine glycosylation occurs at Asn-18. Residues Phe-19–Gln-137 form the MARVEL domain. The next 3 helical transmembrane spans lie at Gly-25–Ser-45, Gly-48–Met-68, and Phe-85–Glu-105. A glycan (N-linked (GlcNAc...) asparagine) is linked at Asn-108. A helical membrane pass occupies residues Ile-112–Thr-132.

As to expression, enriched in colonic mucosa. The expression of A4 follows a gradient along the crypto-villus axis with the most abundant message occurring in the lower half of the crypt.

Its subcellular location is the membrane. Its function is as follows. May play a role in cell differentiation in the intestinal epithelium. This Homo sapiens (Human) protein is Proteolipid protein 2 (PLP2).